A 632-amino-acid chain; its full sequence is Nucleoside triphosphatase I (632 aa).

Residues 42–204 (FLGLDKMHSL…IMLVNLLRPK (163 aa)) form the Helicase ATP-binding domain. Residue 55-62 (HETGVGKT) coordinates ATP. A DEXH box motif is present at residues 141 to 144 (DECH). In terms of domain architecture, Helicase C-terminal spans 367 to 532 (KFTDVCLRIL…EFTQLFKVFK (166 aa)). Residues 457–524 (DIFILDMTWN…DIIRNKSKEF (68 aa)) form a binding to the cap-specific mRNA (nucleoside-2'-O-)-methyltransferase region.

This sequence belongs to the helicase family. NPH I subfamily. In terms of assembly, monomer. Interacts (via C-terminus) with RAP94 (via N-terminus). Interacts with the cap-specific mRNA (nucleoside-2'-O-)-methyltransferase.

The protein resides in the virion. It carries out the reaction a ribonucleoside 5'-triphosphate + H2O = a ribonucleoside 5'-diphosphate + phosphate + H(+). DNA-dependent ATPase required for providing the needed energy to achieve the termination of early transcripts. Acts in concert with the RAP94 subunit of the virion RNA polymerase and the capping enzyme/VTF to catalyze release of UUUUUNU-containing nascent RNA from the elongation complex. NPH-I must bind ssDNA in order to exhibit ATPase activity. The protein is Nucleoside triphosphatase I (NPH1) of Rabbit fibroma virus (strain Kasza) (RFV).